The chain runs to 146 residues: Neuropeptide Y receptor type 2 (146 aa).

The Extracellular segment spans residues 1–8 (KMGPVLCH). A disulfide bridge connects residues C7 and C87. The helical transmembrane segment at 9-29 (LVPYAQGLAVQVSTITLTVIA) threads the bilayer. Residues 30-49 (LDRHRCIVYHLESKISKQIS) lie on the Cytoplasmic side of the membrane. Residues 50–70 (FLIIGLAWGVSALLASPLAIF) traverse the membrane as a helical segment. The Extracellular segment spans residues 71-100 (REYSLIEIIPDFEIVACTEKWPGEEKGIYG). The helical transmembrane segment at 101-121 (TVYSLLSLLILYVLPLGIISF) threads the bilayer. Topologically, residues 122–146 (SYARIWSKLKNHVSPGAAHDHYHQR) are cytoplasmic.

It belongs to the G-protein coupled receptor 1 family.

The protein resides in the cell membrane. Its function is as follows. Receptor for neuropeptide Y and peptide YY. The protein is Neuropeptide Y receptor type 2 (NPY2R) of Ovis aries (Sheep).